Reading from the N-terminus, the 411-residue chain is Solute carrier RCH1 (411 aa).

At 1–17 the chain is on the cytoplasmic side; the sequence is MSLETFRESKAYKWTSK. Residues 18–38 traverse the membrane as a helical segment; the sequence is VISFLIGQWFFIFLGVFIALA. At 39-52 the chain is on the extracellular side; that stretch reads HSYPEFAKQGGTIR. Residues 53-73 traverse the membrane as a helical segment; sequence AEYSIGYGAVAVIFLISGLSM. The Cytoplasmic segment spans residues 74–89; that stretch reads STKQLLVNVANWRAHF. Residues 90–110 traverse the membrane as a helical segment; that stretch reads TVLSMSFLVTSAIIYGIASGI. Over 111 to 120 the chain is Extracellular; it reads KASHNGQIDD. A helical membrane pass occupies residues 121-141; that stretch reads WLLIGLIVTHACPTTVSSNVV. Residues 142–150 lie on the Cytoplasmic side of the membrane; that stretch reads MTKQAHGND. A helical transmembrane segment spans residues 151-171; that stretch reads ILTLCEVFIGNVLGAFITPAL. At 172–204 the chain is on the extracellular side; it reads LQMYMRGTWEIGNPSHQTQGDSTVQELYAHTMK. The helical transmembrane segment at 205–225 threads the bilayer; the sequence is QLGLSVFVPLFVGQVVQNIFP. Topologically, residues 226–242 are cytoplasmic; the sequence is KQTKWCLTTFKLNKVGS. A helical transmembrane segment spans residues 243-263; the sequence is FMLLLIMFQSFSTAFAQHAFT. The Extracellular portion of the chain corresponds to 264–269; it reads SVSHAS. Residues 270 to 290 form a helical membrane-spanning segment; the sequence is IIFLVFFNIGIYLFFTVLTFF. At 291 to 329 the chain is on the cytoplasmic side; that stretch reads YSRPFWILRVFKEEPNESSSKLYRYSYAFFRPFYYNRKD. A helical membrane pass occupies residues 330-350; that stretch reads TVAVMLCGPAKTAALGVSLVS. Topologically, residues 351–361 are extracellular; it reads SQYGSHNPKLG. The helical transmembrane segment at 362–382 threads the bilayer; that stretch reads IILVPLVLYQAEQVMTANVLV. Residues 383–411 lie on the Cytoplasmic side of the membrane; it reads SFMRKWIHAEDKVPEDEETSVGSDNDPKK.

This sequence belongs to the bile acid:sodium symporter (BASS) (TC 2.A.28) family.

The protein resides in the cell membrane. Its subcellular location is the bud neck. Its function is as follows. Solute carrier protein that negatively regulates the cytosolic homeostasis in response to high levels of extracellular calcium. This is Solute carrier RCH1 from Candida albicans (strain SC5314 / ATCC MYA-2876) (Yeast).